A 633-amino-acid polypeptide reads, in one-letter code: CDK5 and ABL1 enzyme substrate 1 (633 aa).

Residues 1–29 (MAAAAAAATTAACSSGSAGTDAAGASGLQ) are compositionally biased toward low complexity. A disordered region spans residues 1–99 (MAAAAAAATT…EGGAAKPGAG (99 aa)). An interaction with TDRD7 region spans residues 1 to 109 (MAAAAAAATT…GACGARTRFS (109 aa)). Residues 51–61 (PPRKPRMDPRR) show a composition bias toward basic and acidic residues. S168 and S287 each carry phosphoserine. Residues 179–492 (QWQPPRPAPL…TTVIDYVKPS (314 aa)) are interaction with CDK3. A Phosphoserine; by CDK2 and CDK3 modification is found at S313. Residue T415 is modified to Phosphothreonine.

This sequence belongs to the cyclin family. As to quaternary structure, found in a complex with p53/TP53. Found in a number of complexes with CDK2, CDK3, CDK5, ABL1, TDRD7, CDK17, CCNA1, CCNE1 and TP73. Interacts with CDK2, CDK3, CDK5, ABL1 and TDRD7. In terms of processing, phosphorylated on Ser-313 by CCNE1/CDK3. Phosphorylated on serine/threonine residues by CDK5 and on tyrosine residues by ABL1. Also phosphorylated in vitro by CCNA1/CDK2, CCNE1/CDK2, CCNA1/CDK3 and CCNE1/CDK3. In terms of tissue distribution, expressed in breast, pancreas, colon, head and neck (at protein level). Strongly decreased in more than half of cases of atypical endometrial hyperplasia and in more than 90% of endometrial cancers.

Its subcellular location is the nucleus. It is found in the cytoplasm. Cyclin-dependent kinase binding protein. Enhances cyclin-dependent kinase tyrosine phosphorylation by nonreceptor tyrosine kinases, such as that of CDK5 by activated ABL1, which leads to increased CDK5 activity and is critical for neuronal development, and that of CDK2 by WEE1, which leads to decreased CDK2 activity and growth inhibition. Positively affects neuronal outgrowth. Plays a role as a regulator for p53/p73-induced cell death. In Homo sapiens (Human), this protein is CDK5 and ABL1 enzyme substrate 1 (CABLES1).